A 285-amino-acid polypeptide reads, in one-letter code: 1,4-dihydroxy-2-naphthoyl-CoA synthase (285 aa).

Residues Arg-45, 84–88, Tyr-97, 129–133, Thr-155, Ser-161, Tyr-258, and Lys-273 contribute to the substrate site; these read AGGDQ and YSIGG. 154-156 contacts hydrogencarbonate; that stretch reads QTG.

This sequence belongs to the enoyl-CoA hydratase/isomerase family. MenB subfamily. In terms of assembly, homohexamer. Hydrogencarbonate serves as cofactor.

It carries out the reaction 2-succinylbenzoyl-CoA + H(+) = 1,4-dihydroxy-2-naphthoyl-CoA + H2O. The protein operates within quinol/quinone metabolism; 1,4-dihydroxy-2-naphthoate biosynthesis; 1,4-dihydroxy-2-naphthoate from chorismate: step 6/7. It participates in quinol/quinone metabolism; menaquinone biosynthesis. Converts o-succinylbenzoyl-CoA (OSB-CoA) to 1,4-dihydroxy-2-naphthoyl-CoA (DHNA-CoA). In Salmonella typhimurium (strain LT2 / SGSC1412 / ATCC 700720), this protein is 1,4-dihydroxy-2-naphthoyl-CoA synthase.